Consider the following 373-residue polypeptide: Forkhead box protein F1 (373 aa).

The interval 1-51 (MTAEIQQPPSQPPAQSSPMSAATDKHGGQPSVMESANCATKTKKTNAGIRR) is disordered. Over residues 13-22 (PAQSSPMSAA) the composition is skewed to low complexity. Positions 54–148 (KPPYSYIALI…EEGSFRRRPR (95 aa)) form a DNA-binding region, fork-head. Disordered stretches follow at residues 236-255 (GSSG…LGGG) and 283-306 (QPLS…SLDQ). Low complexity predominate over residues 286-306 (SPCNSAANPLSSSLSSHSLDQ).

It localises to the nucleus. Its function is as follows. Probable transcription factor. Required for smooth muscle (visceral mesoderm) differentiation during gut development. Also required for normal proliferation of the lateral plate mesoderm. Acts as a downstream mediator of bmp4-signaling. The protein is Forkhead box protein F1 of Xenopus tropicalis (Western clawed frog).